Reading from the N-terminus, the 417-residue chain is WAT1-related protein At3g02690, chloroplastic (417 aa).

The transit peptide at M1–R68 directs the protein to the chloroplast. The segment at V67 to V92 is disordered. Residues R68–V89 are compositionally biased toward low complexity. 10 helical membrane-spanning segments follow: residues F122–M142, F152–Y172, A183–A203, L213–F233, I237–V257, L269–V289, I301–I321, V339–Y359, L369–N389, and F392–F412. 2 consecutive EamA domains span residues F133–L255 and S283–N411.

The protein belongs to the drug/metabolite transporter (DMT) superfamily. Plant drug/metabolite exporter (P-DME) (TC 2.A.7.4) family.

The protein resides in the plastid. Its subcellular location is the chloroplast membrane. The polypeptide is WAT1-related protein At3g02690, chloroplastic (Arabidopsis thaliana (Mouse-ear cress)).